A 436-amino-acid polypeptide reads, in one-letter code: MTVYHFVGIKGTGMSSLAQILHDMKHTVQGSDYEKRFFTQTALEKRSISILPFDKSNVKEGQVIIAGNAFPDTHEEIVAAKELNIPVHRYHHFLGDLMNQYTSVAVTGAHGKTSTTGLLAHVMQGAHPTSYLIGDGTGHGVENSKYFVFEACEYRRHFLSYNPDYAIMTNIDFDHPDYFTDINDVFSAFQEMALQVKKGIIACGDDEELQKIQAKVPVIFYGFGEDNDFQARNIQKRTDGTIFDVFVRNTYYDTFKITGYGNHSVLNALAVIALCHYENVDVEAVKHQLTTFEGVKRRFNEKPMGEQVIIDDYAHHPTEINATIEAARQKHPEREIVVVFQPHTFSRTEKFLDEFAESLSKADQVYLCDIFGSARENKGELTIEDLQKRIDGAELITDTTTDVLKKHKNGVLIFMGAGDIQKFEAAYVKEVQVAEK.

Position 108–114 (108–114 (GAHGKTS)) interacts with ATP.

It belongs to the MurCDEF family.

The protein localises to the cytoplasm. The catalysed reaction is UDP-N-acetyl-alpha-D-muramate + L-alanine + ATP = UDP-N-acetyl-alpha-D-muramoyl-L-alanine + ADP + phosphate + H(+). The protein operates within cell wall biogenesis; peptidoglycan biosynthesis. Cell wall formation. This chain is UDP-N-acetylmuramate--L-alanine ligase, found in Bacillus cereus (strain Q1).